Consider the following 45-residue polypeptide: Parabutoporin (45 aa).

In terms of assembly, monomer and homodimer. As to expression, expressed by the venom gland.

It is found in the secreted. It localises to the target cell membrane. In terms of biological role, at high concentrations, acts as a pore former in cellular membranes and causes the leakage of the cells. At submicromolar concentrations, degranulates granulocytes and has a weak hemolytic activity against human red blood cells. Also strongly inhibits the production of superoxide anions. Has a strong antibacterial activity against Gram-negative bacteria but is less active against Gram-positive bacteria. Also has antifungal activity. Induces reversible G-protein dependent Ca(2+) release from intracellular stores and increase Ca(2+) influx in HL-60 cells. Induces the activation of the Rac pathway in granulocytes. Synergistically enhances the excitatory effects of short and long chain ion-channel-specific neurotoxins by interaction with the neuronal membranes. This chain is Parabutoporin, found in Parabuthus schlechteri (Scorpion).